Reading from the N-terminus, the 60-residue chain is Large ribosomal subunit protein bL32 (60 aa).

The protein belongs to the bacterial ribosomal protein bL32 family.

The protein is Large ribosomal subunit protein bL32 of Clostridium acetobutylicum (strain ATCC 824 / DSM 792 / JCM 1419 / IAM 19013 / LMG 5710 / NBRC 13948 / NRRL B-527 / VKM B-1787 / 2291 / W).